An 806-amino-acid chain; its full sequence is Ankyrin repeat, bromo and BTB domain-containing protein DDB_G0293800 (806 aa).

ANK repeat units lie at residues 1-30 (MSNKTLPYCCEHGLKDEVIALLAKGEDVNQ), 34-63 (SNRYPLHYAAIGGYIEIVAMLLERGALVNC), 67-96 (RGATPLHYASRGGRIECIQLLIDNKADVNC), 100-130 (AGSTPLHTALQCNETKCAIALIETFGADVNL), and 134-163 (EGSTALHLASARGLVPVIVALLENGARADV). The span at 210–228 (GVGKKEDDDNNMKIDKQES) shows a compositional bias: basic and acidic residues. The disordered stretch occupies residues 210-231 (GVGKKEDDDNNMKIDKQESEQQ). The region spanning 239–307 (SDITFLIENQ…IYTGSIEKFE (69 aa)) is the BTB domain. Disordered regions lie at residues 423 to 517 (TRTA…SDSM) and 621 to 743 (QNFP…EERR). Composition is skewed to low complexity over residues 426-436 (ANANASNSNQS) and 443-511 (TSTT…SSSS). The Bromo domain maps to 516-622 (SMNEKNLTFC…NAFDQKFLQN (107 aa)). A compositionally biased stretch (pro residues) spans 626–641 (EKPPTYKPPPPTPTPI). A compositionally biased stretch (low complexity) spans 642–658 (PTQQQQQQSTSSTSTPT). The segment covering 666-675 (DEHVKVKEDT) has biased composition (basic and acidic residues). Polar residues predominate over residues 676–693 (NSAQPTSSSSNHTNGENA). Residues 694 to 733 (SSSSSSSSSKQSNNNNNNNNNNNSNSTTNSSSSSSSTTTT) are compositionally biased toward low complexity. Positions 727–806 (SSSTTTTQKK…ECFKKQKQDE (80 aa)) constitute an NET domain.

This Dictyostelium discoideum (Social amoeba) protein is Ankyrin repeat, bromo and BTB domain-containing protein DDB_G0293800.